The sequence spans 414 residues: MKINGVKGMNDVLPADVARWHEMESVAREVFALYGYREVRTPAVEHAALFARGVGEATDIVNKEMYVFEDKGEELLALRPEGTAGTVRAFIEHGAFVEGPQKWFYMGPMFRRERPQKGRYRQFHQIGCEAFGVAEPYLDAEQIALLADYFARLGVTAELKLNSVGDAQCRPAYLADLKAYLVANQGALCADCKDRIERNPLRVLDCKVESCQPVLEQAPQLLERLCEPCRTHFDQVKAGLDALGVAYRVEPRLVRGLDYYVRTAYEFTSDALGSQSAVAGGGRYDRLVETLGGPPTPGIGFALGEERLSMILEKVGRAMPERRPAVFFVSADATGALEALRLAAGLRRAGIACELDPRGGKLKAQFKQAERVGARWAVVLGGNEVATGQAKLKDLQTREETPVALSELAARVSG.

This sequence belongs to the class-II aminoacyl-tRNA synthetase family. In terms of assembly, homodimer.

The protein localises to the cytoplasm. It carries out the reaction tRNA(His) + L-histidine + ATP = L-histidyl-tRNA(His) + AMP + diphosphate + H(+). This chain is Histidine--tRNA ligase, found in Anaeromyxobacter sp. (strain K).